Consider the following 497-residue polypeptide: Angiopoietin-1 (497 aa).

The N-terminal stretch at 1-19 is a signal peptide; it reads MTVFLSFAFLAAILTHIGC. 5 N-linked (GlcNAc...) asparagine glycosylation sites follow: Asn-92, Asn-122, Asn-154, Asn-243, and Asn-294. A coiled-coil region spans residues 158 to 256; that stretch reads RLEIQLLENS…LQKQQLELMD (99 aa). The Fibrinogen C-terminal domain maps to 276 to 496; that stretch reads KEEEKPFRDC…STTMMIRPLD (221 aa). Disulfide bonds link Cys-285–Cys-314 and Cys-438–Cys-451.

In terms of assembly, homooligomer. Interacts with TEK/TIE2. Interacts with SVEP1/polydom. Interacts with THBD; this interaction significantly inhibits the generation of activated PC and TAFIa/CPB2 by the thrombin/thrombomodulin complex.

Its subcellular location is the secreted. Its function is as follows. Binds and activates TIE2 receptor by inducing its tyrosine phosphorylation. Implicated in endothelial developmental processes later and distinct from that of VEGF. Appears to play a crucial role in mediating reciprocal interactions between the endothelium and surrounding matrix and mesenchyme. Mediates blood vessel maturation/stability. It may play an important role in the heart early development. This Canis lupus familiaris (Dog) protein is Angiopoietin-1 (ANGPT1).